A 330-amino-acid polypeptide reads, in one-letter code: Intraflagellar transport protein 46 homolog (330 aa).

Disordered regions lie at residues 1–21 (MDRP…ATPR) and 55–112 (SIKT…EGVY). Acidic residues predominate over residues 7–16 (ETVDIPDSED). The segment covering 68–79 (SSSEKLCDRGSS) has biased composition (basic and acidic residues). Over residues 80–101 (DDDDDDDNDDDEDEDDDDDDEN) the composition is skewed to acidic residues.

Belongs to the IFT46 family.

The protein resides in the cytoplasm. The protein localises to the cytoskeleton. It localises to the cilium basal body. Its subcellular location is the cell projection. It is found in the cilium. Forms part of a complex involved in intraflagellar transport (IFT), the bi-directional movement of particles required for the assembly, maintenance and functioning of primary cilia. This Schistosoma japonicum (Blood fluke) protein is Intraflagellar transport protein 46 homolog.